Here is a 457-residue protein sequence, read N- to C-terminus: Bifunctional protein GlmU (457 aa).

Residues 1–232 are pyrophosphorylase; it reads MNNLAAVILA…PAEVMGINDR (232 aa). UDP-N-acetyl-alpha-D-glucosamine is bound by residues 9–12, lysine 23, glutamine 75, and 80–81; these read LAAG and GT. A Mg(2+)-binding site is contributed by aspartate 105. 4 residues coordinate UDP-N-acetyl-alpha-D-glucosamine: glycine 142, glutamate 157, asparagine 172, and asparagine 230. Residue asparagine 230 participates in Mg(2+) binding. A linker region spans residues 233–253; the sequence is AQLAEAGQLLRGRINKALMLD. The interval 254–457 is N-acetyltransferase; that stretch reads GTTLIDPQTT…NKEGWKLKKK (204 aa). Positions 336 and 354 each coordinate UDP-N-acetyl-alpha-D-glucosamine. Histidine 366 (proton acceptor) is an active-site residue. UDP-N-acetyl-alpha-D-glucosamine-binding residues include tyrosine 369 and asparagine 380. Residues 389–390, serine 408, alanine 426, and arginine 443 each bind acetyl-CoA; that span reads NY.

This sequence in the N-terminal section; belongs to the N-acetylglucosamine-1-phosphate uridyltransferase family. It in the C-terminal section; belongs to the transferase hexapeptide repeat family. As to quaternary structure, homotrimer. Mg(2+) serves as cofactor.

It localises to the cytoplasm. It carries out the reaction alpha-D-glucosamine 1-phosphate + acetyl-CoA = N-acetyl-alpha-D-glucosamine 1-phosphate + CoA + H(+). It catalyses the reaction N-acetyl-alpha-D-glucosamine 1-phosphate + UTP + H(+) = UDP-N-acetyl-alpha-D-glucosamine + diphosphate. Its pathway is nucleotide-sugar biosynthesis; UDP-N-acetyl-alpha-D-glucosamine biosynthesis; N-acetyl-alpha-D-glucosamine 1-phosphate from alpha-D-glucosamine 6-phosphate (route II): step 2/2. It functions in the pathway nucleotide-sugar biosynthesis; UDP-N-acetyl-alpha-D-glucosamine biosynthesis; UDP-N-acetyl-alpha-D-glucosamine from N-acetyl-alpha-D-glucosamine 1-phosphate: step 1/1. It participates in bacterial outer membrane biogenesis; LPS lipid A biosynthesis. Functionally, catalyzes the last two sequential reactions in the de novo biosynthetic pathway for UDP-N-acetylglucosamine (UDP-GlcNAc). The C-terminal domain catalyzes the transfer of acetyl group from acetyl coenzyme A to glucosamine-1-phosphate (GlcN-1-P) to produce N-acetylglucosamine-1-phosphate (GlcNAc-1-P), which is converted into UDP-GlcNAc by the transfer of uridine 5-monophosphate (from uridine 5-triphosphate), a reaction catalyzed by the N-terminal domain. This Geotalea uraniireducens (strain Rf4) (Geobacter uraniireducens) protein is Bifunctional protein GlmU.